The primary structure comprises 328 residues: MSHVELQPGFDFQQAGKEVLAIERECLAELDQYINQNFTLACEKMFWCKGKVVVMGMGKSGHIGRKMAATFASTGTPSFFVHPSEAAHGDLGMVTPQDVVIAISNSGESSEITALIPVLKRLHVPLICITGRPESSMARAADVHLCVKVAKEACPLGLAPTSSTTATLVMGDALAVALLKARGFTAEDFALSHPGGALGRKLLLRVNDIMHTGDEIPHVKKTASLRDALLEVTRKNLGMTVICDDNMMIEGIFTDGDLRRVFDMGVDVRQLSIADVMTPGGIRVRPGILAVEALNLMQSRHITSVMVADGDHLLGVLHMHDLLRAGVV.

Residues 42-184 (CEKMFWCKGK…AVALLKARGF (143 aa)) form the SIS domain. Substrate is bound by residues 75-76 (GT), histidine 82, histidine 88, 114-123 (ALIPVLKRLH), 148-150 (KVA), threonine 222, and aspartate 275. Histidine 82 contributes to the Zn(2+) binding site. Positions 210–268 (MHTGDEIPHVKKTASLRDALLEVTRKNLGMTVICDDNMMIEGIFTDGDLRRVFDMGVDV) constitute a CBS 1 domain. The CBS 2 domain occupies 277 to 328 (MTPGGIRVRPGILAVEALNLMQSRHITSVMVADGDHLLGVLHMHDLLRAGVV).

Belongs to the SIS family. GutQ/KpsF subfamily. As to quaternary structure, homotetramer.

The enzyme catalyses D-arabinose 5-phosphate = D-ribulose 5-phosphate. It functions in the pathway carbohydrate biosynthesis; 3-deoxy-D-manno-octulosonate biosynthesis; 3-deoxy-D-manno-octulosonate from D-ribulose 5-phosphate: step 1/3. Its pathway is bacterial outer membrane biogenesis; lipopolysaccharide biosynthesis. Involved in the biosynthesis of 3-deoxy-D-manno-octulosonate (KDO), a unique 8-carbon sugar component of lipopolysaccharides (LPSs). Catalyzes the reversible aldol-ketol isomerization between D-ribulose 5-phosphate (Ru5P) and D-arabinose 5-phosphate (A5P). The protein is Arabinose 5-phosphate isomerase KdsD (kdsD) of Shigella flexneri.